The following is a 548-amino-acid chain: Probable bifunctional tRNA threonylcarbamoyladenosine biosynthesis protein (548 aa).

The tract at residues methionine 1–tryptophan 338 is kae1. Histidine 122 and histidine 126 together coordinate Fe cation. L-threonylcarbamoyladenylate is bound by residues asparagine 143 to alanine 147, aspartate 175, glycine 188, glutamate 192, and asparagine 271. Fe cation is bound at residue aspartate 299. Residues arginine 349–glutamine 548 form the Protein kinase domain. ATP contacts are provided by residues valine 355–valine 362 and lysine 371. Residues glutamate 390–arginine 404 show a composition bias toward basic and acidic residues. The interval glutamate 390–arginine 413 is disordered. Aspartate 460 (proton acceptor; for kinase activity) is an active-site residue.

The protein in the N-terminal section; belongs to the KAE1 / TsaD family. In the C-terminal section; belongs to the protein kinase superfamily. Tyr protein kinase family. BUD32 subfamily. In terms of assembly, component of the KEOPS complex that consists of Kae1, Bud32, Cgi121 and Pcc1; the whole complex dimerizes. Fe(2+) serves as cofactor.

Its subcellular location is the cytoplasm. The catalysed reaction is L-seryl-[protein] + ATP = O-phospho-L-seryl-[protein] + ADP + H(+). The enzyme catalyses L-threonyl-[protein] + ATP = O-phospho-L-threonyl-[protein] + ADP + H(+). It catalyses the reaction L-threonylcarbamoyladenylate + adenosine(37) in tRNA = N(6)-L-threonylcarbamoyladenosine(37) in tRNA + AMP + H(+). Its function is as follows. Required for the formation of a threonylcarbamoyl group on adenosine at position 37 (t(6)A37) in tRNAs that read codons beginning with adenine. Is a component of the KEOPS complex that is probably involved in the transfer of the threonylcarbamoyl moiety of threonylcarbamoyl-AMP (TC-AMP) to the N6 group of A37. The Kae1 domain likely plays a direct catalytic role in this reaction. The Bud32 domain probably displays kinase activity that regulates Kae1 function. The polypeptide is Probable bifunctional tRNA threonylcarbamoyladenosine biosynthesis protein (Haloarcula marismortui (strain ATCC 43049 / DSM 3752 / JCM 8966 / VKM B-1809) (Halobacterium marismortui)).